The primary structure comprises 346 residues: 2,5-dichlorohydroquinone reductive dechlorinase (346 aa).

The 112-residue stretch at 43-154 (PRFELFHFVF…YLCDALSGGT (112 aa)) folds into the GST N-terminal domain. In terms of domain architecture, GST C-terminal spans 189 to 335 (DRRPESMQAV…AIIQWPGHPP (147 aa)).

It belongs to the GST superfamily.

The enzyme catalyses 2,5-dichlorohydroquinone + 2 glutathione = chlorohydroquinone + glutathione disulfide + chloride + H(+). It catalyses the reaction chlorohydroquinone + 2 glutathione = hydroquinone + glutathione disulfide + chloride + H(+). The protein operates within xenobiotic degradation; gamma-hexachlorocyclohexane degradation. Catalyzes the degradation of 2,5-dichlorohydroquinone (2,5-DCHQ) into hydroquinone (HQ) via chlorohydroquinone (CHQ). This chain is 2,5-dichlorohydroquinone reductive dechlorinase, found in Sphingobium indicum (strain DSM 16412 / CCM 7286 / MTCC 6364 / B90A).